Reading from the N-terminus, the 206-residue chain is Ras-related protein Ral-A (206 aa).

Residue 21-28 coordinates GTP; the sequence is GSGGVGKS. Residues 43–51 carry the Effector region motif; it reads YEPTKADSY. GTP is bound by residues 68–72 and 127–130; these read DTAGQ and NKSD. The residue at position 194 (Ser194) is a Phosphoserine. Cys203 carries the cysteine methyl ester modification. Cys203 carries the S-geranylgeranyl cysteine lipid modification. Residues 204–206 constitute a propeptide, removed in mature form; the sequence is CIL.

It belongs to the small GTPase superfamily. Ras family. In terms of assembly, interacts (via effector domain) with RALBP1; during mitosis, recruits RALBP1 to the mitochondrion where it promotes DNM1L phosphorylation and mitochondrial fission. Interacts with EXOC2/Sec5 and EXOC8/Exo84; binding to EXOC2 and EXOC8 is mutually exclusive. Interacts with Clostridium exoenzyme C3. Interacts with RALGPS1. Interacts with LPAR1 and LPAR2. Interacts with GRK2 in response to LPAR1 activation. RALA and GRK2 binding to LPAR1 is mutually exclusive. Interacts with CDC42. In terms of processing, prenylation is essential for membrane localization. Post-translationally, phosphorylated. Phosphorylation at Ser-194 by AURKA/Aurora kinase A, during mitosis, induces RALA localization to the mitochondrion where it regulates mitochondrial fission.

It localises to the cell membrane. The protein localises to the cleavage furrow. It is found in the midbody. Its subcellular location is the midbody ring. The protein resides in the mitochondrion. The catalysed reaction is GTP + H2O = GDP + phosphate + H(+). With respect to regulation, alternates between an inactive form bound to GDP and an active form bound to GTP. Activated by a guanine nucleotide-exchange factor (GEF) and inactivated by a GTPase-activating protein (GAP). In terms of biological role, multifunctional GTPase involved in a variety of cellular processes including gene expression, cell migration, cell proliferation, oncogenic transformation and membrane trafficking. Accomplishes its multiple functions by interacting with distinct downstream effectors. Acts as a GTP sensor for GTP-dependent exocytosis of dense core vesicles. Key regulator of LPAR1 signaling and competes with GRK2 for binding to LPAR1 thus affecting the signaling properties of the receptor. Required for anchorage-independent proliferation of transformed cells. The RALA-exocyst complex regulates integrin-dependent membrane raft exocytosis and growth signaling. During mitosis, supports the stabilization and elongation of the intracellular bridge between dividing cells. Cooperates with EXOC2 to recruit other components of the exocyst to the early midbody. During mitosis, also controls mitochondrial fission by recruiting to the mitochondrion RALBP1, which mediates the phosphorylation and activation of DNM1L by the mitotic kinase cyclin B-CDK1. The polypeptide is Ras-related protein Ral-A (Rala) (Mus musculus (Mouse)).